The primary structure comprises 352 residues: uncharacterized protein (352 aa).

Asn-14, Asn-52, and Asn-70 each carry an N-linked (GlcNAc...) asparagine glycan. The interval 41-73 (LSDYKKNKDTLNNSNNNINQPFENSNNFNNNSK) is disordered. Over residues 50-72 (TLNNSNNNINQPFENSNNFNNNS) the composition is skewed to low complexity. Residues 131-151 (IIFKSSGLLITLLVLYLGTFF) traverse the membrane as a helical segment. 6 N-linked (GlcNAc...) asparagine glycosylation sites follow: Asn-165, Asn-186, Asn-192, Asn-193, Asn-203, and Asn-289. A compositionally biased stretch (low complexity) spans 193–213 (NSSNSNNNNINNSNNNNNNNN). The interval 193–219 (NSSNSNNNNINNSNNNNNNNNRILSPN) is disordered.

The protein resides in the membrane. This is an uncharacterized protein from Dictyostelium discoideum (Social amoeba).